A 334-amino-acid chain; its full sequence is Spermatogenesis-associated protein 32 (334 aa).

A disordered region spans residues 24 to 98; that stretch reads SDHHRHHHHH…TESPEQQNYR (75 aa). Over residues 37–47 the composition is skewed to acidic residues; sequence ENEDEDTEVEA. Positions 48–60 are enriched in basic and acidic residues; the sequence is ELPRTEPPPKVDP. The segment covering 77-98 has biased composition (polar residues); that stretch reads SKTTPETEGDSYTESPEQQNYR. Ser-135 and Ser-138 each carry phosphoserine.

In terms of assembly, interacts with syntaxin-1 and ACTB. In terms of tissue distribution, highly expressed in the testis and weakly in the brain and heart.

This Mus musculus (Mouse) protein is Spermatogenesis-associated protein 32 (Spata32).